The sequence spans 238 residues: Probable transcriptional regulatory protein HH_1604 (238 aa).

It belongs to the TACO1 family.

It is found in the cytoplasm. This is Probable transcriptional regulatory protein HH_1604 from Helicobacter hepaticus (strain ATCC 51449 / 3B1).